The sequence spans 169 residues: Ribosomal RNA large subunit methyltransferase H (169 aa).

S-adenosyl-L-methionine contacts are provided by residues Leu-85, Gly-117, and 136–141; that span reads LGELTW.

This sequence belongs to the RNA methyltransferase RlmH family. As to quaternary structure, homodimer.

Its subcellular location is the cytoplasm. The catalysed reaction is pseudouridine(1915) in 23S rRNA + S-adenosyl-L-methionine = N(3)-methylpseudouridine(1915) in 23S rRNA + S-adenosyl-L-homocysteine + H(+). Functionally, specifically methylates the pseudouridine at position 1915 (m3Psi1915) in 23S rRNA. The polypeptide is Ribosomal RNA large subunit methyltransferase H (Brucella abortus biovar 1 (strain 9-941)).